A 384-amino-acid polypeptide reads, in one-letter code: Sphingosine 1-phosphate receptor 4 (384 aa).

Over 1–50 (MNATGTPVAPESCQQLAAGGHSRLIVLHYNHSGRLAGRGGPEDGGLGALR) the chain is Extracellular. 2 N-linked (GlcNAc...) asparagine glycosylation sites follow: Asn-2 and Asn-30. A helical membrane pass occupies residues 51–71 (GLSVAASCLVVLENLLVLAAI). At 72-84 (TSHMRSRRWVYYC) the chain is on the cytoplasmic side. Residues 85–105 (LVNITLSDLLTGAAYLANVLL) traverse the membrane as a helical segment. The Extracellular portion of the chain corresponds to 106–117 (SGARTFRLAPAQ). The chain crosses the membrane as a helical span at residues 118 to 138 (WFLREGLLFTALAASTFSLLF). Residues 139 to 161 (TAGERFATMVRPVAESGATKTSR) are Cytoplasmic-facing. A helical transmembrane segment spans residues 162–182 (VYGFIGLCWLLAALLGMLPLL). At 183–206 (GWNCLCAFDRCSSLLPLYSKRYIL) the chain is on the extracellular side. A helical membrane pass occupies residues 207–227 (FCLVIFAGVLATIMGLYGAIF). Residues 228 to 252 (RLVQASGQKAPRPAARRKARRLLKT) lie on the Cytoplasmic side of the membrane. The helical transmembrane segment at 253–273 (VLMILLAFLVCWGPLFGLLLA) threads the bilayer. The Extracellular portion of the chain corresponds to 274-288 (DVFGSNLWAQEYLRG). The helical transmembrane segment at 289–309 (MDWILALAVLNSAVNPIIYSF) threads the bilayer. The Cytoplasmic segment spans residues 310–384 (RSREVCRAVL…LSSISSVRSI (75 aa)). Cys-323 carries the S-palmitoyl cysteine lipid modification.

This sequence belongs to the G-protein coupled receptor 1 family. As to expression, specifically expressed in fetal and adult lymphoid and hematopoietic tissue as well as in lung. Considerable level of expression in adult and fetal spleen as well as adult peripheral leukocytes and lung. Lower expression in adult thymus, lymph node, bone marrow, and appendix as well as in fetal liver, thymus, and lung.

It is found in the cell membrane. In terms of biological role, receptor for the lysosphingolipid sphingosine 1-phosphate (S1P). S1P is a bioactive lysophospholipid that elicits diverse physiological effect on most types of cells and tissues. May be involved in cell migration processes that are specific for lymphocytes. The protein is Sphingosine 1-phosphate receptor 4 (S1PR4) of Homo sapiens (Human).